The sequence spans 1985 residues: Non-reducing polyketide synthase ntnG (1985 aa).

The segment at 7–243 (LLFGDQADAP…TILPAFGAVH (237 aa)) is N-terminal acylcarrier protein transacylase (SAT) domain. The Ketosynthase family 3 (KS3) domain occupies 364–792 (SGSVAIIGMS…GGNSCFVLEE (429 aa)). Residues Cys536, His671, and His711 each act as for beta-ketoacyl synthase activity in the active site. Residues 889-1148 (VFAFTGQGAH…VNFEQAISHC (260 aa)) form a malonyl-CoA:ACP transacylase (MAT) domain region. Ser980 functions as the For acyl/malonyl transferase activity in the catalytic mechanism. Residues 1261–1392 (HRLVKQEDTA…VRLRDEHAFD (132 aa)) form an N-terminal hotdog fold region. Positions 1261 to 1567 (HRLVKQEDTA…FRKMPRTTLH (307 aa)) constitute a PKS/mFAS DH domain. The tract at residues 1265 to 1566 (KQEDTAKEQH…RFRKMPRTTL (302 aa)) is product template (PT) domain. His1293 functions as the Proton acceptor; for dehydratase activity in the catalytic mechanism. Residues 1414–1567 (AGGRANRFQG…FRKMPRTTLH (154 aa)) are C-terminal hotdog fold. The active-site Proton donor; for dehydratase activity is Asp1479. Residues 1578–1605 (NTKQVPHPTTNGSAIANGVNRNPSHNEP) show a composition bias toward polar residues. The interval 1578-1622 (NTKQVPHPTTNGSAIANGVNRNPSHNEPSTPPVANGVNGTNGDQS) is disordered. One can recognise a Carrier domain in the interval 1622–1699 (SDRKSLYSVL…DAQRELRRLE (78 aa)). The residue at position 1659 (Ser1659) is an O-(pantetheine 4'-phosphoryl)serine. Residues 1719–1913 (TRECNVVLMQ…DCTFVIWAKK (195 aa)) form a thioesterase (TE) domain region.

The protein operates within secondary metabolite biosynthesis; terpenoid biosynthesis. In terms of biological role, non-reducing polyketide synthase; part of the gene cluster that mediates the biosynthesis of the meroterpenoids nectripenoids A and B, as well as cochliquninone D and isocochliquninone E. The pathway probably begins with the HR-PKS ntnH that catalyzes two chain-extension steps to form a reduced triketide, which then primes the SAT domain in the NR-PKS ntnG to initiate three more cycles of extension to give a linear hexaketide corresponding to the polyketide part of nectripenoids. The FAD-dependent monooxygenase ntnJ then performs an oxidative decarboxylation at C11 of the ntnH/ntnG product, via an electrophilic aromatic hydroxylation with concomitant ipso-decarboxylation. The membrane-bound polyprenyl transferase ntnF then introduces a farnesyl group before the FAD-dependent monooxygenase ntnK functions as the first epoxidase on terminal C12'-C13' olefin, followed by a second epoxidation on C7'-C8' catalyzed by ntnA. The terpene cyclase/mutase ntnI then initiates the sequential tricyclic ring formation through protonation of the terminal epoxide and catalyzes the regioselective and stereoselective 6/6/6-tricyclic ring formation. The cytochrome P450 monooxygenase ntnM may then hydroxylate C1'. The chain is Non-reducing polyketide synthase ntnG from Nectria sp.